Here is a 458-residue protein sequence, read N- to C-terminus: Argininosuccinate lyase (458 aa).

Belongs to the lyase 1 family. Argininosuccinate lyase subfamily.

The protein resides in the cytoplasm. The catalysed reaction is 2-(N(omega)-L-arginino)succinate = fumarate + L-arginine. It functions in the pathway amino-acid biosynthesis; L-arginine biosynthesis; L-arginine from L-ornithine and carbamoyl phosphate: step 3/3. In Trichlorobacter lovleyi (strain ATCC BAA-1151 / DSM 17278 / SZ) (Geobacter lovleyi), this protein is Argininosuccinate lyase.